Reading from the N-terminus, the 163-residue chain is Inorganic pyrophosphatase (163 aa).

Mg(2+) is bound at residue E8. Substrate-binding residues include K16, R30, and Y42. Residues D52, D57, D84, and D89 each contribute to the Mg(2+) site. D89 serves as the catalytic Proton acceptor. Y126 lines the substrate pocket.

Belongs to the PPase family. In terms of assembly, homohexamer. It depends on Mg(2+) as a cofactor.

Its subcellular location is the cytoplasm. It carries out the reaction diphosphate + H2O = 2 phosphate + H(+). Functionally, catalyzes the hydrolysis of inorganic pyrophosphate (PPi) forming two phosphate ions. This is Inorganic pyrophosphatase from Streptomyces coelicolor (strain ATCC BAA-471 / A3(2) / M145).